Reading from the N-terminus, the 505-residue chain is Actin nucleation-promoting factor WASL (505 aa).

At serine 2 the chain carries N-acetylserine. A WH1 domain is found at 34 to 141 (LGKKCVTMSS…KAVTDLLGRR (108 aa)). 2 disordered regions span residues 138-163 (LGRR…ATVD) and 184-205 (HTKE…DIGT). Positions 186-198 (KEKKKGKAKKKRL) are enriched in basic residues. Positions 203–216 (IGTPSNFQHIGHVG) constitute a CRIB domain. Serine 242 is modified (phosphoserine; by TNK2). The residue at position 256 (tyrosine 256) is a Phosphotyrosine; by FAK1 and TNK2. The interval 266 to 406 (EAVKNELRRQ…HQVPTTAGNK (141 aa)) is disordered. Pro residues-rich tracts occupy residues 276 to 364 (APPP…PPPS) and 371 to 391 (VAPP…PPGL). Arginine 307 carries the post-translational modification Omega-N-methylarginine. WH2 domains are found at residues 405–422 (NKAA…LKKV) and 433–450 (GRDA…LKSV). The segment at 476-505 (QKRSKAIHSSDEDEDEDDEEDFEDDDEWED) is disordered. Phosphoserine is present on residues serine 484 and serine 485. Over residues 486–505 (DEDEDEDDEEDFEDDDEWED) the composition is skewed to acidic residues.

Binds actin and the Arp2/3 complex. Interacts with CDC42. Interacts with FCHSD1. Interacts with FCHSD2. Binds to SH3 domains of GRB2. Interacts with the C-terminal SH3 domain of DNMBP. Interacts with SNX9. Interacts with the WW domains of PRPF40A/FBP11. Interacts with PTK2/FAK1. Interacts with PACSIN1, PACSIN2 and PACSIN3. Interacts with NOSTRIN. Binds to TNK2. Interacts with SNX33. Interacts with NONO (via second RRM domain); the interaction is direct. Component of a multiprotein complex with NONO and SFPQ; associates with the complex via direct interaction with NONO. In terms of assembly, (Microbial infection) Interacts with E.coli effector protein EspF(U). Identified in a complex containing at least WASL, BAIAP2L1 and E.coli EspF(U). As to quaternary structure, (Microbial infection) Interacts with Shigella flexneri protein IcsA. The interaction with IcsA enhances the affinity of WASL for Arp2/3, thus assembling a tight complex which has maximal activity in actin assembly. Phosphorylation at Ser-242, Tyr-256, Ser-484 and Ser-485 enhances actin polymerization activity.

It is found in the cytoplasm. The protein resides in the cytoskeleton. Its subcellular location is the nucleus. Functionally, regulates actin polymerization by stimulating the actin-nucleating activity of the Arp2/3 complex. Involved in various processes, such as mitosis and cytokinesis, via its role in the regulation of actin polymerization. Together with CDC42, involved in the extension and maintenance of the formation of thin, actin-rich surface projections called filopodia. In addition to its role in the cytoplasm, also plays a role in the nucleus by regulating gene transcription, probably by promoting nuclear actin polymerization. Binds to HSF1/HSTF1 and forms a complex on heat shock promoter elements (HSE) that negatively regulates HSP90 expression. Plays a role in dendrite spine morphogenesis. Decreasing levels of DNMBP (using antisense RNA) alters apical junction morphology in cultured enterocytes, junctions curve instead of being nearly linear. The chain is Actin nucleation-promoting factor WASL (WASL) from Homo sapiens (Human).